The sequence spans 287 residues: Alpha-tubulin N-acetyltransferase 2 (287 aa).

The N-acetyltransferase domain maps to 2–193; it reads VEFAFDIKHL…NNFVLYEGFF (192 aa). Residues 127–140 and 163–172 each bind acetyl-CoA; these read FYVHESRQRCGQGK and SNKMLAFMAK.

The protein belongs to the acetyltransferase ATAT1 family.

Its subcellular location is the midbody. It localises to the midbody ring. It carries out the reaction L-lysyl-[alpha-tubulin] + acetyl-CoA = N(6)-acetyl-L-lysyl-[alpha-tubulin] + CoA + H(+). Its function is as follows. Specifically acetylates 'Lys-40' in alpha-tubulin on the lumenal side of microtubules. Promotes microtubule destabilization and accelerates microtubule dynamics; this activity may be independent of acetylation activity. Acetylates alpha-tubulin with a slow enzymatic rate, due to a catalytic site that is not optimized for acetyl transfer. Enters the microtubule through each end and diffuses quickly throughout the lumen of microtubules. Acetylates only long/old microtubules because of its slow acetylation rate since it does not have time to act on dynamically unstable microtubules before the enzyme is released. Main acetyltransferase responsible for alpha-tubulin 'Lys-40' acetylation in germline cells during the early stages of oogenesis. Required for normal egg chamber separation. The sequence is that of Alpha-tubulin N-acetyltransferase 2 from Drosophila melanogaster (Fruit fly).